The chain runs to 405 residues: Calsequestrin-1 (405 aa).

Positions M1–G34 are cleaved as a signal peptide. Y43 carries the phosphotyrosine modification. Residue S81 is modified to Phosphoserine. T124 carries the post-translational modification Phosphothreonine. S216 carries the post-translational modification Phosphoserine. A glycan (N-linked (GlcNAc...) asparagine) is linked at N350. The disordered stretch occupies residues E382–D405.

The protein belongs to the calsequestrin family. As to quaternary structure, monomer; increases in response to a depletion of intracellular calcium. Homodimer. Homotetramer and homopolymer. Can form linear homooligomers. Ca(2+) ions promote oligomerization. Interacts (via C-terminal end and preferentially with the monomeric form) with STIM1; this interaction increases in response to a depletion of intracellular calcium, decreases both STIM1 aggregation and clustering, interaction of STIM1 with ORAI1 and store-operated Ca(2+) entry (SOCE) activity. Interacts with ASPH and TRDN. In terms of processing, N-glycosylated. Detected in skeletal muscle (at protein level). Detected in skeletal muscle.

The protein resides in the endoplasmic reticulum. It localises to the sarcoplasmic reticulum. The protein localises to the sarcoplasmic reticulum lumen. It is found in the sarcoplasmic reticulum membrane. Its subcellular location is the mitochondrion matrix. In terms of biological role, calsequestrin is a high-capacity, moderate affinity, calcium-binding protein and thus acts as an internal calcium store in muscle. Calcium ions are bound by clusters of acidic residues at the protein surface, often at the interface between subunits. Can bind around 80 Ca(2+) ions. Regulates the release of lumenal Ca(2+) via the calcium release channel RYR1; this plays an important role in triggering muscle contraction. Negatively regulates store-operated Ca(2+) entry (SOCE) activity. This Mus musculus (Mouse) protein is Calsequestrin-1 (Casq1).